The sequence spans 477 residues: Bifunctional protein HldE (477 aa).

The ribokinase stretch occupies residues 1 to 321 (MKILKSFTPR…EYEASLHKST (321 aa)). ATP is bound at residue 198-201 (NKKE). D266 is an active-site residue. Residues 348-477 (FTNGCFDILH…IQKIKGDLHV (130 aa)) form a cytidylyltransferase region.

It in the N-terminal section; belongs to the carbohydrate kinase PfkB family. The protein in the C-terminal section; belongs to the cytidylyltransferase family. As to quaternary structure, homodimer.

The enzyme catalyses D-glycero-beta-D-manno-heptose 7-phosphate + ATP = D-glycero-beta-D-manno-heptose 1,7-bisphosphate + ADP + H(+). The catalysed reaction is D-glycero-beta-D-manno-heptose 1-phosphate + ATP + H(+) = ADP-D-glycero-beta-D-manno-heptose + diphosphate. Its pathway is nucleotide-sugar biosynthesis; ADP-L-glycero-beta-D-manno-heptose biosynthesis; ADP-L-glycero-beta-D-manno-heptose from D-glycero-beta-D-manno-heptose 7-phosphate: step 1/4. It functions in the pathway nucleotide-sugar biosynthesis; ADP-L-glycero-beta-D-manno-heptose biosynthesis; ADP-L-glycero-beta-D-manno-heptose from D-glycero-beta-D-manno-heptose 7-phosphate: step 3/4. Functionally, catalyzes the phosphorylation of D-glycero-D-manno-heptose 7-phosphate at the C-1 position to selectively form D-glycero-beta-D-manno-heptose-1,7-bisphosphate. Catalyzes the ADP transfer from ATP to D-glycero-beta-D-manno-heptose 1-phosphate, yielding ADP-D-glycero-beta-D-manno-heptose. This Sulfurimonas denitrificans (strain ATCC 33889 / DSM 1251) (Thiomicrospira denitrificans (strain ATCC 33889 / DSM 1251)) protein is Bifunctional protein HldE.